The chain runs to 80 residues: MVVIRLARGGAKNRPFYNIVVTDSRNRRDGRFIERVGFYNPVAAEGSERIRLNSDRLAYWTGVGAQVSDAVAKLLKQQAA.

It belongs to the bacterial ribosomal protein bS16 family.

This chain is Small ribosomal subunit protein bS16, found in Laribacter hongkongensis (strain HLHK9).